Here is a 990-residue protein sequence, read N- to C-terminus: Aminopeptidase Q (990 aa).

At 2–13 (GPPSSSGFYVSR) the chain is on the cytoplasmic side. The helical; Signal-anchor for type II membrane protein transmembrane segment at 14–34 (AVALLLAGLVAALLLALAVLA) threads the bilayer. At 35–990 (ALYGHCERVP…RIAAWLRRNT (956 aa)) the chain is on the lumenal side. The segment at 48-91 (LPGLRDLEAESSPPLRQKPTPTPKPSSARELAVTTTPSNWRPPG) is disordered. 2 N-linked (GlcNAc...) asparagine glycosylation sites follow: Asn-132 and Asn-168. Glu-240 contacts substrate. Residues Asn-261, Asn-288, Asn-319, and Asn-346 are each glycosylated (N-linked (GlcNAc...) asparagine). 379-383 (HAMEN) serves as a coordination point for substrate. Residue His-415 coordinates Zn(2+). Residue Glu-416 is the Proton acceptor of the active site. The Zn(2+) site is built by His-419 and Glu-438. The active-site Proton donor is Tyr-503. Residues Asn-607 and Asn-653 are each glycosylated (N-linked (GlcNAc...) asparagine).

Belongs to the peptidase M1 family. In terms of assembly, homodimer. Zn(2+) serves as cofactor. In terms of processing, N-glycosylated. Specifically expressed in placenta and not in other tissues. Mainly found at the cell surface region of the extravillous trophoblasts. Detected on extravillous trophoblasts in the outer layer of the chorion laeve in the fetal membrane Not detected on either fetal amnionic epithelial cells or maternal decidual cells. Also detected in the migrating extravillous trophoblasts in the maternal decidual tissues (at protein level).

The protein localises to the membrane. Its activity is regulated as follows. Inhibited by bestatin. In terms of biological role, metalloprotease which may be important for placentation by regulating biological activity of key peptides at the embryo-maternal interface. On synthetic substrates it shows a marked preference for Leu-4-methylcoumaryl-7-amide (Leu-MCA) over Met-MCA, Arg-LCA and Lys-LCA. Cleaves the N-terminal amino acid of several peptides such as angiotensin-3, kisspeptin-10 and endokinin C. This Homo sapiens (Human) protein is Aminopeptidase Q.